The chain runs to 82 residues: Protein transport protein SBH1 (82 aa).

The interval 1-36 is disordered; sequence MSSPTPPGGQRTLQKRKQGSSQKVAASAPKKNTNSN. The Cytoplasmic portion of the chain corresponds to 1 to 53; the sequence is MSSPTPPGGQRTLQKRKQGSSQKVAASAPKKNTNSNNSILKIYSDEATGLRVD. A compositionally biased stretch (polar residues) spans 19-36; the sequence is GSSQKVAASAPKKNTNSN. A helical membrane pass occupies residues 54-74; it reads PLVVLFLAVGFIFSVVALHVI.

Belongs to the SEC61-beta family. As to quaternary structure, component of the heterotrimeric Sec61 complex, which is composed of SSH1, SBH1 and SSS1. Presumably three to four Sec61 heterotrimers assemble into an oligomeric ring with a central aqueous pore. In cotranslational ER import, the pore diameter varies from 9-15 A in a ribosome-free resting state to 40-60 A in a functional state when associated with the ribosome. The Sec61 complex is part of a channel-forming translocon complex whose composition seem to change dependent upon different functional states. During post-translational ER import the Sec61 complex associates with the Sec62/63 complex to form the Sec complex. SBH1 interacts OST2, OST4 and WBP1 components of the OT complex.

The protein localises to the endoplasmic reticulum membrane. Part of the Sec61 complex, which is the major component of a channel-forming translocon complex that mediates protein translocation across the endoplasmic reticulum (ER). The functional states of the translocon complex include co- and post-translational ER import, cotranslational membrane protein integration and retrograde transport of misfolded proteins out of the ER. In the cotranslational pathway, ribosomes synthesizing presecretory proteins are targeted to the translocon by the cytosolic signal recognition particle (SRP) and its ER-localized receptor. The association of the Sec61 complex with the ribosome is mediated by the 28S rRNA of the large ribosomal subunit. SRP-independent post-translational translocation requires the association of additional factors, such as the Sec62/63 complex and KAR2. The chain is Protein transport protein SBH1 (SBH1) from Saccharomyces cerevisiae (strain ATCC 204508 / S288c) (Baker's yeast).